Here is a 396-residue protein sequence, read N- to C-terminus: MSETTATSTTTTKTTDKDNVNNNNNNENKEEKQPINIIVLGMAGSGKTTLLQRIRAHLYENKIPGYIINLDPAVSKLPYTPNIDIRDTVNYKEVMKQFNLGPNGGIVTSLNLFSTKFDKVLEIVEKRSSSLDYIILDTPGQIEVFTWSASGTIITELMASSFPTVLVYVVDTPRTVDPTTFMSNMLYACSIMYKSKLPMVVAFNKIDITNHRFAEEWMSDFDSFQDALTNDPTYMGNLTRSLSLVLEEFYSTLQSVGVSAVDGSGIDEFFEKIGLAAQDYHKYYKADLEKIKKQKSDKEQAEANKNWEKLKRDLEESKGAKVEYDFKKEKKRENQEKTKNIYDDEEDDYRDDRDMEDSGEYESYEDEQEEGDYENEEERLEDQRAYESLMSSIKKI.

Positions 1-13 (MSETTATSTTTTK) are enriched in low complexity. Positions 1–30 (MSETTATSTTTTKTTDKDNVNNNNNNENKE) are disordered. Residue 44–49 (GSGKTT) participates in GTP binding. A Gly-Pro-Asn (GPN)-loop; involved in dimer interface motif is present at residues 101–103 (GPN). 204-207 (NKID) provides a ligand contact to GTP. Residues 284 to 387 (YKADLEKIKK…ERLEDQRAYE (104 aa)) adopt a coiled-coil conformation. Residues 325–342 (DFKKEKKRENQEKTKNIY) show a composition bias toward basic and acidic residues. The interval 325–396 (DFKKEKKREN…ESLMSSIKKI (72 aa)) is disordered. Positions 343–380 (DDEEDDYRDDRDMEDSGEYESYEDEQEEGDYENEEERL) are enriched in acidic residues.

Belongs to the GPN-loop GTPase family. In terms of assembly, heterodimer with gpn3. Binds to RNA polymerase II (RNAPII).

It localises to the cytoplasm. It is found in the nucleus. Small GTPase required for proper nuclear import of RNA polymerase II (RNAPII). May act at an RNAP assembly step prior to nuclear import. This is GPN-loop GTPase 1 (gpn1) from Dictyostelium discoideum (Social amoeba).